The sequence spans 545 residues: T-complex protein 1 subunit gamma (545 aa).

Residue M1 is modified to N-acetylmethionine. Residues 1–24 (MMGHRPVLVLSQNTKRESGRKVQS) form a disordered region. S11 carries the post-translational modification Phosphoserine. K15 participates in a covalent cross-link: Glycyl lysine isopeptide (Lys-Gly) (interchain with G-Cter in SUMO2). Position 42 (G42) interacts with ADP. G42 lines the ATP pocket. D93 provides a ligand contact to Mg(2+). 6 residues coordinate ADP: G94, T95, T96, S97, T162, and K163. 3 residues coordinate ATP: G94, T95, and T96. At S170 the chain carries Phosphoserine. The residue at position 222 (K222) is an N6-acetyllysine. A phosphoserine mark is found at S243 and S244. Y247 bears the Phosphotyrosine mark. Residues K248 and K249 each participate in a glycyl lysine isopeptide (Lys-Gly) (interchain with G-Cter in SUMO2) cross-link. S252 is subject to Phosphoserine. C366 and C372 form a disulfide bridge. Residue K381 forms a Glycyl lysine isopeptide (Lys-Gly) (interchain with G-Cter in SUMO2) linkage. ADP is bound at residue G411. G411 provides a ligand contact to ATP. Phosphothreonine is present on residues T430 and T459. ADP contacts are provided by G482, E483, E497, and K502. An ATP-binding site is contributed by G482. E497 contacts ATP. Positions 526-545 (HKKKGDDQSRQGGAPDAGQE) are disordered.

This sequence belongs to the TCP-1 chaperonin family. As to quaternary structure, component of the chaperonin-containing T-complex (TRiC), a hexadecamer composed of two identical back-to-back stacked rings enclosing a protein folding chamber. Each ring is made up of eight different subunits: TCP1/CCT1, CCT2, CCT3, CCT4, CCT5, CCT6A/CCT6, CCT7, CCT8. Interacts with PACRG. Interacts with DNAAF4. Interacts with DLEC1.

It localises to the cytoplasm. The enzyme catalyses ATP + H2O = ADP + phosphate + H(+). Functionally, component of the chaperonin-containing T-complex (TRiC), a molecular chaperone complex that assists the folding of actin, tubulin and other proteins upon ATP hydrolysis. The TRiC complex mediates the folding of WRAP53/TCAB1, thereby regulating telomere maintenance. As part of the TRiC complex may play a role in the assembly of BBSome, a complex involved in ciliogenesis regulating transports vesicles to the cilia. This is T-complex protein 1 subunit gamma (CCT3) from Homo sapiens (Human).